The sequence spans 537 residues: O-phosphoserine--tRNA(Cys) ligase (537 aa).

Substrate contacts are provided by residues 186–188, 231–233, 273–274, and N317; these read HMT, SAS, and YY.

The protein belongs to the class-II aminoacyl-tRNA synthetase family. O-phosphoseryl-tRNA(Cys) synthetase subfamily. In terms of assembly, homotetramer. Interacts with SepCysS.

The catalysed reaction is tRNA(Cys) + O-phospho-L-serine + ATP = O-phospho-L-seryl-tRNA(Cys) + AMP + diphosphate. In terms of biological role, catalyzes the attachment of O-phosphoserine (Sep) to tRNA(Cys). The polypeptide is O-phosphoserine--tRNA(Cys) ligase (Methanococcus vannielii (strain ATCC 35089 / DSM 1224 / JCM 13029 / OCM 148 / SB)).